We begin with the raw amino-acid sequence, 494 residues long: Ell-associated factor Eaf (494 aa).

Polar residues predominate over residues lysine 119–methionine 138. Disordered regions lie at residues lysine 119–histidine 212 and glutamine 243–aspartate 494. A compositionally biased stretch (low complexity) spans serine 139–glycine 156. Residues glutamate 159–asparagine 178 are compositionally biased toward polar residues. Position 188 is a phosphoserine (serine 188). 2 stretches are compositionally biased toward polar residues: residues glutamine 243 to glycine 256 and glutamine 280 to alanine 306. Over residues glutamine 307–glutamine 319 the composition is skewed to low complexity. Over residues arginine 320 to methionine 332 the composition is skewed to polar residues. The span at glutamine 344 to serine 373 shows a compositional bias: low complexity. The span at aspartate 374 to glutamate 389 shows a compositional bias: acidic residues. Residues histidine 414–proline 424 are compositionally biased toward low complexity. The segment covering serine 437–glutamine 454 has biased composition (basic residues). Composition is skewed to low complexity over residues glutamine 455–serine 464 and asparagine 475–serine 488.

Belongs to the EAF family.

Its subcellular location is the nucleus. Promotes transcriptional elongation by Su(Tpl)/ELL. Essential for development. In Drosophila virilis (Fruit fly), this protein is Ell-associated factor Eaf.